The chain runs to 410 residues: Toluene 1,2-dioxygenase system ferredoxin--NAD(+) reductase component (410 aa).

4–35 (HVAIIGNGVGGFTTAQALRAEGFEGRISLIGD) contributes to the FAD binding site. Position 145 to 173 (145 to 173 (RLLIVGGGLIGCEVATTARKLGLSVTILE)) interacts with NAD(+).

This sequence belongs to the bacterial ring-hydroxylating dioxygenase ferredoxin reductase family. As to quaternary structure, this dioxygenase system consists of four proteins: the two subunits of the hydroxylase component (todC1 and todC2), a ferredoxin (TodB) and a ferredoxin reductase (TodA). Requires FAD as cofactor.

The enzyme catalyses 2 reduced [2Fe-2S]-[ferredoxin] + NAD(+) + H(+) = 2 oxidized [2Fe-2S]-[ferredoxin] + NADH. It participates in xenobiotic degradation; toluene degradation. Its function is as follows. Part of the electron transfer component of toluene 1,2-dioxygenase, transfers electrons from ferredoxin (TodB) to NADH. This chain is Toluene 1,2-dioxygenase system ferredoxin--NAD(+) reductase component (todA), found in Pseudomonas putida (strain ATCC 700007 / DSM 6899 / JCM 31910 / BCRC 17059 / LMG 24140 / F1).